The chain runs to 744 residues: CCR4-NOT transcription complex subunit 10 (744 aa).

The segment covering 1 to 16 (MAADKPADQGAEKHEG) has biased composition (basic and acidic residues). The interval 1–25 (MAADKPADQGAEKHEGTGQSSGITD) is disordered. An N-acetylalanine modification is found at alanine 2. A coiled-coil region spans residues 74–107 (KSNQTTTDNLRQTLNQLKNQVHSAVEEMDGLDDV). The span at 183–199 (NNNKNGKNETGNNNNKD) shows a compositional bias: low complexity. Disordered stretches follow at residues 183–204 (NNNKNGKNETGNNNNKDGSNHK), 477–521 (QDPK…PPSS), and 602–634 (VSLGISSNEQDQGSDKGENEAMESSGKRAPQCY). Positions 484 to 495 (GAKNSNQLGGNT) are enriched in polar residues. Low complexity predominate over residues 496–506 (ESSESSETCSS). The span at 602–612 (VSLGISSNEQD) shows a compositional bias: polar residues.

The protein belongs to the CNOT10 family. In terms of assembly, component of the CCR4-NOT complex; distinct complexes seem to exist that differ in the participation of probably mutually exclusive catalytic subunits. CNOT10 and CNOT11 form a subcomplex docked to the CNOT1 scaffold.

It is found in the cytoplasm. The protein resides in the nucleus. Its function is as follows. Component of the CCR4-NOT complex which is one of the major cellular mRNA deadenylases and is linked to various cellular processes including bulk mRNA degradation, miRNA-mediated repression, translational repression during translational initiation and general transcription regulation. Additional complex functions may be a consequence of its influence on mRNA expression. Is not required for association of CNOT7 to the CCR4-NOT complex. The chain is CCR4-NOT transcription complex subunit 10 (CNOT10) from Homo sapiens (Human).